The sequence spans 291 residues: Dihydroorotate dehydrogenase A (fumarate) (291 aa).

Residues S18 and 42-43 (KS) each bind FMN. Residues K42, 66 to 70 (NAVGL), and N126 contribute to the substrate site. Residue N126 coordinates FMN. The active-site Nucleophile is the C129. Positions 164 and 190 each coordinate FMN. 191 to 192 (NT) contacts substrate. Residues G216, 242–243 (GG), and 264–265 (GS) each bind FMN.

The protein belongs to the dihydroorotate dehydrogenase family. Type 1 subfamily. As to quaternary structure, homodimer. Requires FMN as cofactor.

It is found in the cytoplasm. The catalysed reaction is (S)-dihydroorotate + fumarate = orotate + succinate. It participates in pyrimidine metabolism; UMP biosynthesis via de novo pathway. Its function is as follows. Catalyzes the conversion of dihydroorotate to orotate with fumarate as the electron acceptor. In Lacticaseibacillus paracasei (strain ATCC 334 / BCRC 17002 / CCUG 31169 / CIP 107868 / KCTC 3260 / NRRL B-441) (Lactobacillus paracasei), this protein is Dihydroorotate dehydrogenase A (fumarate) (pyrD).